The following is a 411-amino-acid chain: Conserved oligomeric Golgi complex subunit 5 (411 aa).

This sequence belongs to the COG5 family. In terms of assembly, component of the conserved oligomeric Golgi (COG) complex which consists of eight different proteins cog1-cog8.

The protein resides in the cytoplasm. The protein localises to the golgi apparatus membrane. Its function is as follows. Acts as essential component of the peripheral membrane COG complex that is involved in intra-Golgi protein trafficking. COG is located at the cis-Golgi, and regulates tethering of retrograde intra-Golgi vesicles and possibly a number of other membrane trafficking events. In Schizosaccharomyces pombe (strain 972 / ATCC 24843) (Fission yeast), this protein is Conserved oligomeric Golgi complex subunit 5 (cog5).